Here is a 325-residue protein sequence, read N- to C-terminus: Elongation factor P--(R)-beta-lysine ligase (325 aa).

Residue 76–78 coordinates substrate; that stretch reads SPE. ATP is bound by residues 100 to 102 and Asn109; that span reads RNE. Tyr118 provides a ligand contact to substrate. Residue 244–245 coordinates ATP; sequence EL. Glu251 is a binding site for substrate. Gly300 is an ATP binding site.

Belongs to the class-II aminoacyl-tRNA synthetase family. EpmA subfamily. Homodimer.

It catalyses the reaction D-beta-lysine + L-lysyl-[protein] + ATP = N(6)-((3R)-3,6-diaminohexanoyl)-L-lysyl-[protein] + AMP + diphosphate + H(+). With EpmB is involved in the beta-lysylation step of the post-translational modification of translation elongation factor P (EF-P). Catalyzes the ATP-dependent activation of (R)-beta-lysine produced by EpmB, forming a lysyl-adenylate, from which the beta-lysyl moiety is then transferred to the epsilon-amino group of a conserved specific lysine residue in EF-P. This is Elongation factor P--(R)-beta-lysine ligase from Yersinia enterocolitica serotype O:8 / biotype 1B (strain NCTC 13174 / 8081).